We begin with the raw amino-acid sequence, 494 residues long: 3-octaprenyl-4-hydroxybenzoate carboxy-lyase (494 aa).

Mn(2+) is bound at residue asparagine 172. Prenylated FMN contacts are provided by residues 175 to 177 (IYR), 189 to 191 (RWL), and 194 to 195 (RG). Position 238 (glutamate 238) interacts with Mn(2+). The Proton donor role is filled by aspartate 294.

The protein belongs to the UbiD family. In terms of assembly, homohexamer. The cofactor is prenylated FMN. Mn(2+) is required as a cofactor.

Its subcellular location is the cell membrane. It carries out the reaction a 4-hydroxy-3-(all-trans-polyprenyl)benzoate + H(+) = a 2-(all-trans-polyprenyl)phenol + CO2. The protein operates within cofactor biosynthesis; ubiquinone biosynthesis. Functionally, catalyzes the decarboxylation of 3-octaprenyl-4-hydroxy benzoate to 2-octaprenylphenol, an intermediate step in ubiquinone biosynthesis. The sequence is that of 3-octaprenyl-4-hydroxybenzoate carboxy-lyase from Janthinobacterium sp. (strain Marseille) (Minibacterium massiliensis).